Consider the following 758-residue polypeptide: Catalase-peroxidase (758 aa).

Polar residues predominate over residues 1-10 (MSDTQDNAPA). Residues 1-59 (MSDTQDNAPASAQGVDQKAAAGCPVAHDSVTAHGSESESPAIDSPTPHSGGRPRTNRDW) are disordered. The tryptophyl-tyrosyl-methioninium (Trp-Tyr) (with M-276) cross-link spans 128-250 (WHAAGTYRID…VGATEMGLIY (123 aa)). The active-site Proton acceptor is H129. Positions 250–276 (YVNPEGPRGNADPAAAAHFIRETFRRM) form a cross-link, tryptophyl-tyrosyl-methioninium (Tyr-Met) (with W-128). Heme b is bound at residue H291.

It belongs to the peroxidase family. Peroxidase/catalase subfamily. As to quaternary structure, homodimer or homotetramer. It depends on heme b as a cofactor. Post-translationally, formation of the three residue Trp-Tyr-Met cross-link is important for the catalase, but not the peroxidase activity of the enzyme.

It carries out the reaction H2O2 + AH2 = A + 2 H2O. The catalysed reaction is 2 H2O2 = O2 + 2 H2O. In terms of biological role, bifunctional enzyme with both catalase and broad-spectrum peroxidase activity. This is Catalase-peroxidase from Salinispora arenicola (strain CNS-205).